Consider the following 211-residue polypeptide: Phosphoribosyl-dephospho-CoA transferase (211 aa).

Active-site residues include aspartate 136 and aspartate 138.

It belongs to the MdcG family.

It catalyses the reaction apo-[malonate decarboxylase ACP] + 2'-(5''-triphospho-alpha-D-ribosyl)-3'-dephospho-CoA = holo-[malonate decarboxylase ACP] + diphosphate. Its function is as follows. Transfers 2'-(5-triphosphoribosyl)-3'-dephosphocoenzyme-A to the apo-[acyl-carrier-protein] of the malonate decarboxylase to yield holo-[acyl-carrier-protein]. The sequence is that of Phosphoribosyl-dephospho-CoA transferase from Pseudomonas syringae pv. tomato (strain ATCC BAA-871 / DC3000).